A 598-amino-acid chain; its full sequence is Polypeptide N-acetylgalactosaminyltransferase 17 (598 aa).

Over 1-6 (MASLRR) the chain is Cytoplasmic. The helical; Signal-anchor for type II membrane protein transmembrane segment at 7 to 27 (VKVLLVLNLIAVAGFVIFLAK) threads the bilayer. The Lumenal portion of the chain corresponds to 28–598 (CRPIAVRSGD…QRWAIKNPIK (571 aa)). Asn50 carries an N-linked (GlcNAc...) asparagine glycan. 2 cysteine pairs are disulfide-bonded: Cys142-Cys373 and Cys364-Cys443. The segment at 151–262 (LPQISIIFIF…AGWAEPVLSR (112 aa)) is catalytic subdomain A. 2 residues coordinate substrate: Asp192 and Arg223. Mn(2+) is bound by residues Asp246, His248, and His378. The segment at 319–381 (PIRTPAMIGC…PCSRVAHIER (63 aa)) is catalytic subdomain B. The substrate site is built by Arg381 and Tyr386. 2 N-linked (GlcNAc...) asparagine glycosylation sites follow: Asn461 and Asn486. A Ricin B-type lectin domain is found at 465–594 (AYGELRNNKA…SCTGQRWAIK (130 aa)). Intrachain disulfides connect Cys478-Cys494, Cys526-Cys541, and Cys568-Cys586.

Belongs to the glycosyltransferase 2 family. GalNAc-T subfamily. Requires Mn(2+) as cofactor.

The protein localises to the golgi apparatus membrane. The enzyme catalyses L-seryl-[protein] + UDP-N-acetyl-alpha-D-galactosamine = a 3-O-[N-acetyl-alpha-D-galactosaminyl]-L-seryl-[protein] + UDP + H(+). It catalyses the reaction L-threonyl-[protein] + UDP-N-acetyl-alpha-D-galactosamine = a 3-O-[N-acetyl-alpha-D-galactosaminyl]-L-threonyl-[protein] + UDP + H(+). It functions in the pathway protein modification; protein glycosylation. In terms of biological role, may catalyze the initial reaction in O-linked oligosaccharide biosynthesis, the transfer of an N-acetyl-D-galactosamine residue to a serine or threonine residue on the protein receptor. In Mus musculus (Mouse), this protein is Polypeptide N-acetylgalactosaminyltransferase 17.